A 191-amino-acid polypeptide reads, in one-letter code: Protein YceI (191 aa).

The N-terminal stretch at 1–22 (MKKSLLGLTFASLMFSAGSAVA) is a signal peptide.

It belongs to the UPF0312 family. Type 1 subfamily.

The protein localises to the periplasm. The chain is Protein YceI from Shigella flexneri.